The primary structure comprises 677 residues: Threonine--tRNA ligase (677 aa).

Residues 1–59 enclose the TGS domain; the sequence is MAQATISITVNGEAKEVEATTTGVELFAEDKNIIAVKINGENRDLYTPLNDGDTVDPIA. The interval 255-561 is catalytic; sequence DHRKLGAEMD…LLEHYAGAFP (307 aa). Zn(2+)-binding residues include Cys360, His411, and His538.

This sequence belongs to the class-II aminoacyl-tRNA synthetase family. Homodimer. The cofactor is Zn(2+).

The protein localises to the cytoplasm. The enzyme catalyses tRNA(Thr) + L-threonine + ATP = L-threonyl-tRNA(Thr) + AMP + diphosphate + H(+). Functionally, catalyzes the attachment of threonine to tRNA(Thr) in a two-step reaction: L-threonine is first activated by ATP to form Thr-AMP and then transferred to the acceptor end of tRNA(Thr). Also edits incorrectly charged L-seryl-tRNA(Thr). The sequence is that of Threonine--tRNA ligase from Bifidobacterium longum (strain NCC 2705).